The sequence spans 83 residues: Gas vesicle protein G (83 aa).

It belongs to the gas vesicle GvpG family. As to quaternary structure, gvpF to GvpM interact with each other in vitro, and may form multi-subunit complex(es).

It is found in the gas vesicle. Its function is as follows. Proteins GvpF to GvpM might be involved in nucleating gas vesicle formation. A minor component of the gas vesicle. Gas vesicles are hollow, gas filled proteinaceous nanostructures found in some microorganisms. They allow positioning of halobacteria at the optimal depth for growth in the poorly aerated, shallow brine pools of their habitat. Functionally, expression of a 9.5 kb mc-vac DNA fragment containing 2 divergently transcribed regions (gvpD-gvpE-gvpF-gvpG-gvpH-gvpI-gvpJ-gvpK-gvpL-gvpM and gvpA-gvpC-gvpN-gvpO) allows H.volcanii to produce gas vesicles. This is Gas vesicle protein G from Haloferax mediterranei (strain ATCC 33500 / DSM 1411 / JCM 8866 / NBRC 14739 / NCIMB 2177 / R-4) (Halobacterium mediterranei).